The sequence spans 355 residues: 3-dehydroquinate synthase (355 aa).

Residues 71–76, 105–109, 129–130, K142, K151, and 169–172 each bind NAD(+); these read EGEASK, GVVGD, TS, and TLNT. Residues E184, H246, and H263 each contribute to the Zn(2+) site.

Belongs to the sugar phosphate cyclases superfamily. Dehydroquinate synthase family. The cofactor is NAD(+). Co(2+) serves as cofactor. It depends on Zn(2+) as a cofactor.

Its subcellular location is the cytoplasm. The catalysed reaction is 7-phospho-2-dehydro-3-deoxy-D-arabino-heptonate = 3-dehydroquinate + phosphate. It functions in the pathway metabolic intermediate biosynthesis; chorismate biosynthesis; chorismate from D-erythrose 4-phosphate and phosphoenolpyruvate: step 2/7. Catalyzes the conversion of 3-deoxy-D-arabino-heptulosonate 7-phosphate (DAHP) to dehydroquinate (DHQ). The polypeptide is 3-dehydroquinate synthase (Streptococcus mutans serotype c (strain ATCC 700610 / UA159)).